Consider the following 333-residue polypeptide: Large ribosomal subunit protein uL3 (333 aa).

This sequence belongs to the universal ribosomal protein uL3 family. As to quaternary structure, part of the 50S ribosomal subunit. Forms a cluster with proteins L14 and L24e.

Functionally, one of the primary rRNA binding proteins, it binds directly near the 3'-end of the 23S rRNA, where it nucleates assembly of the 50S subunit. The chain is Large ribosomal subunit protein uL3 from Methanocorpusculum labreanum (strain ATCC 43576 / DSM 4855 / Z).